Here is a 154-residue protein sequence, read N- to C-terminus: Urease accessory protein UreE (154 aa).

The interval 135-154 is disordered; sequence YGHGRTFGHDHGHAHDHHHA.

It belongs to the UreE family.

It is found in the cytoplasm. Involved in urease metallocenter assembly. Binds nickel. Probably functions as a nickel donor during metallocenter assembly. In Paracoccus denitrificans (strain Pd 1222), this protein is Urease accessory protein UreE.